The following is a 156-amino-acid chain: Pilin-like protein PilA1 (156 aa).

A propeptide spans Met1–Gly5 (leader sequence). An N-methylleucine modification is found at Leu6. The chain crosses the membrane as a helical span at residues Leu6–Leu29.

It is found in the cell inner membrane. The protein resides in the cell outer membrane. Its subcellular location is the periplasm. Its function is as follows. Plays an essential role in natural DNA transformation but is not required for pilus biogenesis. The polypeptide is Pilin-like protein PilA1 (pilA1) (Thermus thermophilus (strain ATCC BAA-163 / DSM 7039 / HB27)).